We begin with the raw amino-acid sequence, 303 residues long: Protein SULFUR DEFICIENCY-INDUCED 2 (303 aa).

Residues R62–S89 adopt a coiled-coil conformation. TPR repeat units follow at residues D64–Q97, E100–G133, S160–A193, and K195–E226. Residues R232–A253 are a coiled coil.

Belongs to the MS5 protein family.

It localises to the nucleus. Involved in the utilization of stored sulfate under sulfur-deficient conditions. The chain is Protein SULFUR DEFICIENCY-INDUCED 2 from Arabidopsis thaliana (Mouse-ear cress).